Here is a 378-residue protein sequence, read N- to C-terminus: UPF0754 membrane protein BcerKBAB4_0766 (378 aa).

2 consecutive transmembrane segments (helical) span residues 1 to 21 (MNIW…GGYT) and 357 to 377 (YLGA…LLFL).

The protein belongs to the UPF0754 family.

The protein resides in the cell membrane. The sequence is that of UPF0754 membrane protein BcerKBAB4_0766 from Bacillus mycoides (strain KBAB4) (Bacillus weihenstephanensis).